We begin with the raw amino-acid sequence, 367 residues long: Phosphoribosylaminoimidazole-succinocarboxamide synthase (367 aa).

The protein belongs to the SAICAR synthetase family.

The enzyme catalyses 5-amino-1-(5-phospho-D-ribosyl)imidazole-4-carboxylate + L-aspartate + ATP = (2S)-2-[5-amino-1-(5-phospho-beta-D-ribosyl)imidazole-4-carboxamido]succinate + ADP + phosphate + 2 H(+). It functions in the pathway purine metabolism; IMP biosynthesis via de novo pathway; 5-amino-1-(5-phospho-D-ribosyl)imidazole-4-carboxamide from 5-amino-1-(5-phospho-D-ribosyl)imidazole-4-carboxylate: step 1/2. This Shewanella baltica (strain OS185) protein is Phosphoribosylaminoimidazole-succinocarboxamide synthase.